We begin with the raw amino-acid sequence, 524 residues long: Anthranilate synthase component 1 (524 aa).

Residues S55 and 297–299 (PYM) contribute to the L-tryptophan site. 332–333 (GT) lines the chorismate pocket. A Mg(2+)-binding site is contributed by E359. Chorismate-binding positions include Y447, R467, 485 to 487 (GAG), and G487. E500 provides a ligand contact to Mg(2+).

This sequence belongs to the anthranilate synthase component I family. Heterotetramer consisting of two non-identical subunits: a beta subunit (TrpG) and a large alpha subunit (TrpE). Mg(2+) serves as cofactor.

It carries out the reaction chorismate + L-glutamine = anthranilate + pyruvate + L-glutamate + H(+). It functions in the pathway amino-acid biosynthesis; L-tryptophan biosynthesis; L-tryptophan from chorismate: step 1/5. Feedback inhibited by tryptophan. Part of a heterotetrameric complex that catalyzes the two-step biosynthesis of anthranilate, an intermediate in the biosynthesis of L-tryptophan. In the first step, the glutamine-binding beta subunit (TrpG) of anthranilate synthase (AS) provides the glutamine amidotransferase activity which generates ammonia as a substrate that, along with chorismate, is used in the second step, catalyzed by the large alpha subunit of AS (TrpE) to produce anthranilate. In the absence of TrpG, TrpE can synthesize anthranilate directly from chorismate and high concentrations of ammonia. This is Anthranilate synthase component 1 (trpE) from Haloferax volcanii (strain ATCC 29605 / DSM 3757 / JCM 8879 / NBRC 14742 / NCIMB 2012 / VKM B-1768 / DS2) (Halobacterium volcanii).